Consider the following 94-residue polypeptide: FXYD domain-containing ion transport regulator 6 (94 aa).

The first 17 residues, 1-17, serve as a signal peptide directing secretion; it reads METVLILCSLLAPVVLA. Topologically, residues 18–34 are extracellular; sequence SAAEKEKEKDPFYYDYQ. The helical transmembrane segment at 35–57 threads the bilayer; it reads TLRIGGLVFAVVLFSVGILLILS. Residues 58-94 lie on the Cytoplasmic side of the membrane; that stretch reads RRCKCSFNQKPRAPGDEEAQVENLITTNAAEPQKAEN.

The protein belongs to the FXYD family. As to quaternary structure, regulatory subunit of the sodium/potassium-transporting ATPase which is composed of a catalytic alpha subunit, a non-catalytic beta subunit and an additional regulatory subunit. The regulatory subunit, a member of the FXYD protein family, modulates the enzymatic activity in a tissue- and isoform-specific way by changing affinities of the Na+/K+-ATPase toward Na(+), K(+) or ATP. In terms of tissue distribution, expressed in the neuronal fibers of the medial part of lateral habenula nucleus, thalamus, hypothalamus, stria terminalis, zona incerta, amygdaloid body and cingulum, olfactory bulb, hippocampus, cerebral cortex and cerebellum. In the cerebellum there is a predominant expression pattern in the granule layer of lobules VI-IX of the posterior lobe. Detected in inner ear.

It localises to the cell membrane. Functionally, associates with and regulates the activity of the sodium/potassium-transporting ATPase (NKA) which catalyzes the hydrolysis of ATP coupled with the exchange of Na(+) and K(+) ions across the plasma membrane. Decreases the apparent affinity of the transporter for Na(+). In addition to modulating NKA kinetics, may also function as a regulator of NKA localization to the plasma membrane. The sequence is that of FXYD domain-containing ion transport regulator 6 (Fxyd6) from Rattus norvegicus (Rat).